Here is a 393-residue protein sequence, read N- to C-terminus: Dual-specificity RNA methyltransferase RlmN (393 aa).

Residues 1–22 are disordered; the sequence is MSEQLLSELSPVAATSPSPAPA. Residues 10 to 22 show a composition bias toward low complexity; it reads SPVAATSPSPAPA. The active-site Proton acceptor is the glutamate 114. In terms of domain architecture, Radical SAM core spans 120–358; it reads EDDRATLCVS…TTIVRKTRGD (239 aa). Residues cysteine 127 and cysteine 364 are joined by a disulfide bond. [4Fe-4S] cluster is bound by residues cysteine 134, cysteine 138, and cysteine 141. S-adenosyl-L-methionine-binding positions include 188 to 189, serine 220, 242 to 244, and asparagine 321; these read GE and SLH. Residue cysteine 364 is the S-methylcysteine intermediate of the active site.

This sequence belongs to the radical SAM superfamily. RlmN family. [4Fe-4S] cluster serves as cofactor.

Its subcellular location is the cytoplasm. The enzyme catalyses adenosine(2503) in 23S rRNA + 2 reduced [2Fe-2S]-[ferredoxin] + 2 S-adenosyl-L-methionine = 2-methyladenosine(2503) in 23S rRNA + 5'-deoxyadenosine + L-methionine + 2 oxidized [2Fe-2S]-[ferredoxin] + S-adenosyl-L-homocysteine. It catalyses the reaction adenosine(37) in tRNA + 2 reduced [2Fe-2S]-[ferredoxin] + 2 S-adenosyl-L-methionine = 2-methyladenosine(37) in tRNA + 5'-deoxyadenosine + L-methionine + 2 oxidized [2Fe-2S]-[ferredoxin] + S-adenosyl-L-homocysteine. Functionally, specifically methylates position 2 of adenine 2503 in 23S rRNA and position 2 of adenine 37 in tRNAs. m2A2503 modification seems to play a crucial role in the proofreading step occurring at the peptidyl transferase center and thus would serve to optimize ribosomal fidelity. This Sodalis glossinidius (strain morsitans) protein is Dual-specificity RNA methyltransferase RlmN.